Consider the following 110-residue polypeptide: Histone H2A.1 (110 aa).

This sequence belongs to the histone H2A family. The nucleosome is a histone octamer containing two molecules each of H2A, H2B, H3 and H4 assembled in one H3-H4 heterotetramer and two H2A-H2B heterodimers. The octamer wraps approximately 147 bp of DNA. As to expression, expressed in the generative cell within the bicellular pollen. Not detected in other reproductive or vegetative tissues.

It is found in the nucleus. It localises to the chromosome. Functionally, core component of nucleosome. Nucleosomes wrap and compact DNA into chromatin, limiting DNA accessibility to the cellular machineries which require DNA as a template. Histones thereby play a central role in transcription regulation, DNA repair, DNA replication and chromosomal stability. DNA accessibility is regulated via a complex set of post-translational modifications of histones, also called histone code, and nucleosome remodeling. This chain is Histone H2A.1 (gcH2A), found in Lilium longiflorum (Trumpet lily).